Consider the following 217-residue polypeptide: Leucyl/phenylalanyl-tRNA--protein transferase (217 aa).

Belongs to the L/F-transferase family.

Its subcellular location is the cytoplasm. It catalyses the reaction N-terminal L-lysyl-[protein] + L-leucyl-tRNA(Leu) = N-terminal L-leucyl-L-lysyl-[protein] + tRNA(Leu) + H(+). The catalysed reaction is N-terminal L-arginyl-[protein] + L-leucyl-tRNA(Leu) = N-terminal L-leucyl-L-arginyl-[protein] + tRNA(Leu) + H(+). It carries out the reaction L-phenylalanyl-tRNA(Phe) + an N-terminal L-alpha-aminoacyl-[protein] = an N-terminal L-phenylalanyl-L-alpha-aminoacyl-[protein] + tRNA(Phe). In terms of biological role, functions in the N-end rule pathway of protein degradation where it conjugates Leu, Phe and, less efficiently, Met from aminoacyl-tRNAs to the N-termini of proteins containing an N-terminal arginine or lysine. This chain is Leucyl/phenylalanyl-tRNA--protein transferase, found in Caulobacter vibrioides (strain ATCC 19089 / CIP 103742 / CB 15) (Caulobacter crescentus).